Reading from the N-terminus, the 488-residue chain is GTPase Der (488 aa).

EngA-type G domains follow at residues 3 to 166 (PVVA…AEAM) and 199 to 372 (IKLA…DSAT). Residues 9 to 16 (GRPNVGKS), 56 to 60 (DTGGI), 118 to 121 (NKID), 205 to 212 (GKPNVGKS), 252 to 256 (DTAGV), and 317 to 320 (NKWD) each bind GTP. Positions 373 to 457 (RRVSTSMLTR…PIQLRFQEGD (85 aa)) constitute a KH-like domain.

It belongs to the TRAFAC class TrmE-Era-EngA-EngB-Septin-like GTPase superfamily. EngA (Der) GTPase family. Associates with the 50S ribosomal subunit.

GTPase that plays an essential role in the late steps of ribosome biogenesis. The polypeptide is GTPase Der (Shewanella sp. (strain ANA-3)).